The following is a 726-amino-acid chain: Catalase-peroxidase (726 aa).

The disordered stretch occupies residues M1–H34. Residues W105–Y226 constitute a cross-link (tryptophyl-tyrosyl-methioninium (Trp-Tyr) (with M-252)). The active-site Proton acceptor is H106. Positions Y226–M252 form a cross-link, tryptophyl-tyrosyl-methioninium (Tyr-Met) (with W-105). H267 is a heme b binding site.

Belongs to the peroxidase family. Peroxidase/catalase subfamily. Homodimer or homotetramer. Heme b is required as a cofactor. Formation of the three residue Trp-Tyr-Met cross-link is important for the catalase, but not the peroxidase activity of the enzyme.

It carries out the reaction H2O2 + AH2 = A + 2 H2O. The catalysed reaction is 2 H2O2 = O2 + 2 H2O. Its function is as follows. Bifunctional enzyme with both catalase and broad-spectrum peroxidase activity. The polypeptide is Catalase-peroxidase (Citrobacter koseri (strain ATCC BAA-895 / CDC 4225-83 / SGSC4696)).